The following is a 388-amino-acid chain: Succinate--CoA ligase [ADP-forming] subunit beta (388 aa).

Positions 9-245 constitute an ATP-grasp domain; sequence KALLKEYGMP…KSQENERELK (237 aa). Residues K46, 53 to 55, E100, Y103, and E108 contribute to the ATP site; that span reads GRG. Residues N200 and D214 each contribute to the Mg(2+) site. Residues N265 and 322–324 each bind substrate; that span reads GIV.

It belongs to the succinate/malate CoA ligase beta subunit family. Heterotetramer of two alpha and two beta subunits. It depends on Mg(2+) as a cofactor.

It carries out the reaction succinate + ATP + CoA = succinyl-CoA + ADP + phosphate. The catalysed reaction is GTP + succinate + CoA = succinyl-CoA + GDP + phosphate. It participates in carbohydrate metabolism; tricarboxylic acid cycle; succinate from succinyl-CoA (ligase route): step 1/1. Succinyl-CoA synthetase functions in the citric acid cycle (TCA), coupling the hydrolysis of succinyl-CoA to the synthesis of either ATP or GTP and thus represents the only step of substrate-level phosphorylation in the TCA. The beta subunit provides nucleotide specificity of the enzyme and binds the substrate succinate, while the binding sites for coenzyme A and phosphate are found in the alpha subunit. This Acinetobacter baumannii (strain AB307-0294) protein is Succinate--CoA ligase [ADP-forming] subunit beta.